Reading from the N-terminus, the 101-residue chain is uncharacterized protein (101 aa).

The N-terminal stretch at 1–24 is a signal peptide; sequence MILMFRMNKGMSFITLLFSLALFS.

This is an uncharacterized protein from Haemophilus influenzae (strain ATCC 51907 / DSM 11121 / KW20 / Rd).